The primary structure comprises 564 residues: Ubiquitin carboxyl-terminal hydrolase 39 (564 aa).

Residues 1-96 (MSSRSKRQSH…VRAKNGRVDS (96 aa)) are disordered. A compositionally biased stretch (basic and acidic residues) spans 28-39 (IKKERDREKEPE). Ser-46 is subject to Phosphoserine. Lys-51 is covalently cross-linked (Glycyl lysine isopeptide (Lys-Gly) (interchain with G-Cter in SUMO2)). Residues 59–69 (REVPAPALPVV) are compositionally biased toward low complexity. Ser-81 bears the Phosphoserine mark. Positions 84–96 (EREVRAKNGRVDS) are enriched in basic and acidic residues. Residues 102-199 (RHCPYLDTIN…YVLKPTFTKQ (98 aa)) form a UBP-type; degenerate zinc finger. Zn(2+)-binding residues include Cys-135, Cys-138, His-154, and His-160. The USP domain occupies 224 to 554 (VGLNNIKAND…EAYIQIWKRR (331 aa)).

Belongs to the peptidase C19 family. The U4/U6-U5 tri-snRNP complex is a building block of the precatalytic spliceosome (spliceosome B complex). Component of the U4/U6-U5 tri-snRNP complex composed of the U4, U6 and U5 snRNAs and at least PRPF3, PRPF4, PRPF6, PRPF8, PRPF31, SNRNP200, TXNL4A, SNRNP40, SNRPB, SNRPD1, SNRPD2, SNRPD3, SNRPE, SNRPF, SNRPG, DDX23, CD2BP2, PPIH, SNU13, EFTUD2, SART1 and USP39, plus LSM2, LSM3, LSM4, LSM5, LSM6, LSM7 and LSM8.

Its subcellular location is the nucleus. It catalyses the reaction Thiol-dependent hydrolysis of ester, thioester, amide, peptide and isopeptide bonds formed by the C-terminal Gly of ubiquitin (a 76-residue protein attached to proteins as an intracellular targeting signal).. Its function is as follows. Deubiquitinating enzyme that plays a role in many cellular processes including cellular antiviral response, epithelial morphogenesis, DNA repair or B-cell development. Plays a role in pre-mRNA splicing as a component of the U4/U6-U5 tri-snRNP, one of the building blocks of the precatalytic spliceosome. Specifically regulates immunoglobulin gene rearrangement in a spliceosome-dependent manner, which involves modulating chromatin interactions at the Igh locus and therefore plays an essential role in B-cell development. Regulates AURKB mRNA levels, and thereby plays a role in cytokinesis and in the spindle checkpoint. Regulates apoptosis and G2/M cell cycle checkpoint in response to DNA damage by deubiquitinating and stabilizing CHK2. Also plays an important role in DNA repair by controlling the recruitment of XRCC4/LIG4 to DNA double-strand breaks for non-homologous end-joining repair. Participates in antiviral activity by affecting the type I IFN signaling by stabilizing STAT1 and decreasing its 'Lys-6'-linked ubiquitination. Contributes to non-canonical Wnt signaling during epidermal differentiation. Acts as a negative regulator NF-kappa-B activation through deubiquitination of 'Lys-48'-linked ubiquitination of NFKBIA. The chain is Ubiquitin carboxyl-terminal hydrolase 39 from Mus musculus (Mouse).